A 557-amino-acid chain; its full sequence is Potassium-transporting ATPase potassium-binding subunit (557 aa).

12 helical membrane-spanning segments follow: residues 5 to 25, 63 to 83, 132 to 152, 170 to 190, 253 to 273, 283 to 303, 329 to 349, 356 to 376, 379 to 399, 416 to 436, 484 to 504, and 526 to 546; these read GFLL…PLGS, LCAI…MLLG, GLTV…FALI, LLRI…LFFI, FVQM…FGEV, LLWA…WAEV, VLVS…AVIA, ALGG…FGGV, GLYG…LMIG, LTAL…ALAM, LLAF…MAIA, and LFVG…FIPA.

This sequence belongs to the KdpA family. The system is composed of three essential subunits: KdpA, KdpB and KdpC.

It localises to the cell inner membrane. Part of the high-affinity ATP-driven potassium transport (or Kdp) system, which catalyzes the hydrolysis of ATP coupled with the electrogenic transport of potassium into the cytoplasm. This subunit binds the periplasmic potassium ions and delivers the ions to the membrane domain of KdpB through an intramembrane tunnel. The chain is Potassium-transporting ATPase potassium-binding subunit from Escherichia coli O17:K52:H18 (strain UMN026 / ExPEC).